The sequence spans 427 residues: Endothelin-1 receptor (427 aa).

Residues 1 to 20 (METLCLRASFWLALVGCVIS) form the signal peptide. The Extracellular portion of the chain corresponds to 21–80 (DNPERYSTNLSNHVDDFTTFRGTELSFLVTTHQPTNLVLPSNGSMHNYCPQQTKITSAFK). 2 N-linked (GlcNAc...) asparagine glycosylation sites follow: Asn-29 and Asn-62. A helical transmembrane segment spans residues 81–102 (YINTVISCTIFIVGMVGNATLL). Topologically, residues 103–112 (RIIYQNKCMR) are cytoplasmic. Residues 113 to 132 (NGPNALIASLALGDLIYVVI) form a helical membrane-spanning segment. The Extracellular portion of the chain corresponds to 133–159 (DLPINVFKLLAGRWPFDHNDFGVFLCK). A disulfide bridge connects residues Cys-158 and Cys-239. Residues 160 to 181 (LFPFLQKSSVGITVLNLCALSV) traverse the membrane as a helical segment. Residues 182 to 205 (DRYRAVASWSRVQGIGIPLVTAIE) are Cytoplasmic-facing. Residues 206-229 (IVSIWILSFILAIPEAIGFVMVPF) traverse the membrane as a helical segment. At 230 to 256 (EYRGEQHKTCMLNATSKFMEFYQDVKD) the chain is on the extracellular side. The helical transmembrane segment at 257-278 (WWLFGFYFCMPLVCTAIFYTLM) threads the bilayer. Residues 279–306 (TCEMLNRRNGSLRIALSEHLKQRREVAK) are Cytoplasmic-facing. The chain crosses the membrane as a helical span at residues 307-328 (TVFCLVVIFALCWFPLHLSRIL). Residues 329 to 347 (KKTVYNEMDKNRCELLSFL) lie on the Extracellular side of the membrane. Residues 348 to 372 (LLMDYIGINLATMNSCINPIALYFV) traverse the membrane as a helical segment. The Cytoplasmic portion of the chain corresponds to 373–427 (SKKFKNCFQSCLCCCCYQSKSLMTSVPMNGTSIQWKNHDQNNHNTDRSSHKDSMN). Residues 406-427 (QWKNHDQNNHNTDRSSHKDSMN) form a disordered region. Basic and acidic residues predominate over residues 408-427 (KNHDQNNHNTDRSSHKDSMN). Ser-425 is subject to Phosphoserine.

This sequence belongs to the G-protein coupled receptor 1 family. Endothelin receptor subfamily. EDNRA sub-subfamily. In terms of assembly, interacts with HDAC7 and KAT5. In terms of tissue distribution, isoform 1, isoform 3 and isoform 4 are expressed in a variety of tissues, with highest levels in the aorta and cerebellum, followed by lung, atrium and cerebral cortex, lower levels in the placenta, kidney, adrenal gland, duodenum, colon, ventricle and liver but no expression in umbilical vein endothelial cells. Within the placenta, isoform 1, isoform 2, isoform 3 and isoform 4 are expressed in the villi and stem villi vessels.

The protein resides in the cell membrane. Its function is as follows. Receptor for endothelin-1. Mediates its action by association with G proteins that activate a phosphatidylinositol-calcium second messenger system. The rank order of binding affinities for ET-A is: ET1 &gt; ET2 &gt;&gt; ET3. The polypeptide is Endothelin-1 receptor (Homo sapiens (Human)).